The chain runs to 143 residues: MSARRPPRATPTPCPCGLGAEYDACCGRYHRGDAVPPNAEALMRSRYTAYVMGNMDWVRQTWHPSTCPADLLPDTATRWLGLSVKAHSQQDDTHAEVEFVARYKVGGRAWRLHERSRFVREPRAAGEPPVWLYVDGDMIGEAS.

It belongs to the UPF0225 family.

In Cupriavidus pinatubonensis (strain JMP 134 / LMG 1197) (Cupriavidus necator (strain JMP 134)), this protein is UPF0225 protein Reut_A0143.